The following is a 318-amino-acid chain: Homoserine kinase (318 aa).

Residue Pro97–Cys107 coordinates ATP.

This sequence belongs to the GHMP kinase family. Homoserine kinase subfamily.

It is found in the cytoplasm. It carries out the reaction L-homoserine + ATP = O-phospho-L-homoserine + ADP + H(+). The protein operates within amino-acid biosynthesis; L-threonine biosynthesis; L-threonine from L-aspartate: step 4/5. Functionally, catalyzes the ATP-dependent phosphorylation of L-homoserine to L-homoserine phosphate. The protein is Homoserine kinase of Vibrio parahaemolyticus serotype O3:K6 (strain RIMD 2210633).